Here is a 120-residue protein sequence, read N- to C-terminus: Ribosome-binding factor A (120 aa).

The protein belongs to the RbfA family. Monomer. Binds 30S ribosomal subunits, but not 50S ribosomal subunits or 70S ribosomes.

The protein resides in the cytoplasm. Functionally, one of several proteins that assist in the late maturation steps of the functional core of the 30S ribosomal subunit. Associates with free 30S ribosomal subunits (but not with 30S subunits that are part of 70S ribosomes or polysomes). Required for efficient processing of 16S rRNA. May interact with the 5'-terminal helix region of 16S rRNA. This Borrelia garinii subsp. bavariensis (strain ATCC BAA-2496 / DSM 23469 / PBi) (Borreliella bavariensis) protein is Ribosome-binding factor A.